The sequence spans 202 residues: Hypoxanthine-guanine phosphoribosyltransferase (202 aa).

Diphosphate-binding residues include Lys66 and Gly67. Glu122 and Asp123 together coordinate Mg(2+). The active-site Proton acceptor is Asp126. Residues Lys154, 175–176, and Asp182 each bind GMP; that span reads FV. Diphosphate is bound at residue Arg188.

The protein belongs to the purine/pyrimidine phosphoribosyltransferase family. As to quaternary structure, homodimer and homotetramer in equilibrium. The presence or absence of divalent metal ions, as well as phosphate, can affect the oligomerization state of the enzyme. Likely functions as a tetramer (rather than a dimer) in its biological environment, which is the most active form. The dimeric structure is also active though ~50% of that of the tetramer. Requires Mg(2+) as cofactor.

Its subcellular location is the cytoplasm. The catalysed reaction is IMP + diphosphate = hypoxanthine + 5-phospho-alpha-D-ribose 1-diphosphate. The enzyme catalyses GMP + diphosphate = guanine + 5-phospho-alpha-D-ribose 1-diphosphate. It participates in purine metabolism; IMP biosynthesis via salvage pathway; IMP from hypoxanthine: step 1/1. It functions in the pathway purine metabolism; GMP biosynthesis via salvage pathway; GMP from guanine: step 1/1. Its activity is regulated as follows. Competitively inhibited by acyclic nucleoside phosphonates (ANPs) with Ki values as low as 0.69 uM. Prodrugs of these compounds arrest the growth of a virulent strain of M.tuberculosis with MIC50 values as low as 4.5 uM and possess low cytotoxicity in mammalian cells. Inhibited by pyrrolidine nucleoside bisphosphonates, which are also able to arrest the growth of virulent M.tuberculosis not only in its replicating phase but also in its latent phase, and to arrest the growth of M.tuberculosis in infected macrophages while having low cytotoxicity in mammalian cells. In terms of biological role, purine salvage pathway enzyme that catalyzes the transfer of the ribosyl-5-phosphate group from 5-phospho-alpha-D-ribose 1-diphosphate (PRPP) to the N9 position of the 6-oxopurines hypoxanthine and guanine to form the corresponding ribonucleotides IMP (inosine 5'-monophosphate) and GMP (guanosine 5'-monophosphate), with the release of PPi. Thus, specifically recycles hypoxanthine and guanine imported from the external medium, and converts them to IMP and GMP, respectively. Cannot use xanthine as substrate. This is Hypoxanthine-guanine phosphoribosyltransferase from Mycobacterium tuberculosis (strain ATCC 25618 / H37Rv).